A 136-amino-acid polypeptide reads, in one-letter code: Peptide methionine sulfoxide reductase MsrB (136 aa).

The MsrB domain occupies 13–135 (ENDWRSKLTP…NSASLDFKDK (123 aa)). 4 residues coordinate Zn(2+): C52, C55, C101, and C104. C124 (nucleophile) is an active-site residue.

The protein belongs to the MsrB Met sulfoxide reductase family. Zn(2+) is required as a cofactor.

It carries out the reaction L-methionyl-[protein] + [thioredoxin]-disulfide + H2O = L-methionyl-(R)-S-oxide-[protein] + [thioredoxin]-dithiol. This chain is Peptide methionine sulfoxide reductase MsrB, found in Synechococcus sp. (strain RCC307).